Reading from the N-terminus, the 347-residue chain is N-acetyl-gamma-glutamyl-phosphate reductase (347 aa).

Residue C153 is part of the active site.

It belongs to the NAGSA dehydrogenase family. Type 1 subfamily.

It is found in the cytoplasm. The catalysed reaction is N-acetyl-L-glutamate 5-semialdehyde + phosphate + NADP(+) = N-acetyl-L-glutamyl 5-phosphate + NADPH + H(+). Its pathway is amino-acid biosynthesis; L-arginine biosynthesis; N(2)-acetyl-L-ornithine from L-glutamate: step 3/4. Its function is as follows. Catalyzes the NADPH-dependent reduction of N-acetyl-5-glutamyl phosphate to yield N-acetyl-L-glutamate 5-semialdehyde. This is N-acetyl-gamma-glutamyl-phosphate reductase from Mycobacterium avium (strain 104).